The chain runs to 355 residues: Holliday junction branch migration complex subunit RuvB (355 aa).

The segment at M1 to Y193 is large ATPase domain (RuvB-L). Residues L32, R33, G74, K77, T78, S79, E140 to F142, R183, Y193, and R230 contribute to the ATP site. T78 serves as a coordination point for Mg(2+). A small ATPAse domain (RuvB-S) region spans residues E194–D264. The segment at E267–D355 is head domain (RuvB-H). Residues R322 and R327 each contribute to the DNA site.

It belongs to the RuvB family. In terms of assembly, homohexamer. Forms an RuvA(8)-RuvB(12)-Holliday junction (HJ) complex. HJ DNA is sandwiched between 2 RuvA tetramers; dsDNA enters through RuvA and exits via RuvB. An RuvB hexamer assembles on each DNA strand where it exits the tetramer. Each RuvB hexamer is contacted by two RuvA subunits (via domain III) on 2 adjacent RuvB subunits; this complex drives branch migration. In the full resolvosome a probable DNA-RuvA(4)-RuvB(12)-RuvC(2) complex forms which resolves the HJ.

The protein resides in the cytoplasm. It catalyses the reaction ATP + H2O = ADP + phosphate + H(+). Its function is as follows. The RuvA-RuvB-RuvC complex processes Holliday junction (HJ) DNA during genetic recombination and DNA repair, while the RuvA-RuvB complex plays an important role in the rescue of blocked DNA replication forks via replication fork reversal (RFR). RuvA specifically binds to HJ cruciform DNA, conferring on it an open structure. The RuvB hexamer acts as an ATP-dependent pump, pulling dsDNA into and through the RuvAB complex. RuvB forms 2 homohexamers on either side of HJ DNA bound by 1 or 2 RuvA tetramers; 4 subunits per hexamer contact DNA at a time. Coordinated motions by a converter formed by DNA-disengaged RuvB subunits stimulates ATP hydrolysis and nucleotide exchange. Immobilization of the converter enables RuvB to convert the ATP-contained energy into a lever motion, pulling 2 nucleotides of DNA out of the RuvA tetramer per ATP hydrolyzed, thus driving DNA branch migration. The RuvB motors rotate together with the DNA substrate, which together with the progressing nucleotide cycle form the mechanistic basis for DNA recombination by continuous HJ branch migration. Branch migration allows RuvC to scan DNA until it finds its consensus sequence, where it cleaves and resolves cruciform DNA. The polypeptide is Holliday junction branch migration complex subunit RuvB (Mycolicibacterium vanbaalenii (strain DSM 7251 / JCM 13017 / BCRC 16820 / KCTC 9966 / NRRL B-24157 / PYR-1) (Mycobacterium vanbaalenii)).